A 524-amino-acid chain; its full sequence is Cytosolic Fe-S cluster assembly factor NAR1 (524 aa).

6 residues coordinate [4Fe-4S] cluster: cysteine 20, cysteine 52, cysteine 55, cysteine 58, cysteine 158, and cysteine 206. A disordered region spans residues 362 to 388 (IRKRPTANGNDNSISLSSSINNQDNNN). Over residues 369-388 (NGNDNSISLSSSINNQDNNN) the composition is skewed to low complexity. Residues cysteine 408 and cysteine 412 each contribute to the [4Fe-4S] cluster site. The interval 501-524 (SSISETHNGDSKNTIEQPVQFTTW) is disordered.

This sequence belongs to the NARF family.

Functionally, component of the cytosolic Fe/S protein assembly machinery. Required for maturation of extramitochondrial Fe/S proteins. May play a role in the transfer of pre-assembled Fe/S clusters to target apoproteins. This is Cytosolic Fe-S cluster assembly factor NAR1 (NAR1) from Vanderwaltozyma polyspora (strain ATCC 22028 / DSM 70294 / BCRC 21397 / CBS 2163 / NBRC 10782 / NRRL Y-8283 / UCD 57-17) (Kluyveromyces polysporus).